The following is an 815-amino-acid chain: Probable oligoxyloglucan-reducing end-specific xyloglucanase (815 aa).

The signal sequence occupies residues 1 to 19; it reads MKFWLQQLGLAVLCASSAA. The active-site Nucleophile is Asp58. Asn113 carries an N-linked (GlcNAc...) asparagine glycan. Residues 118-128 form a BNR 1 repeat; it reads FVSNDRGATFT. N-linked (GlcNAc...) asparagine glycosylation is present at Asn180. Residues 218–228 form a BNR 2 repeat; that stretch reads YYTTDGGKNWE. Residues Asn246, Asn290, and Asn304 are each glycosylated (N-linked (GlcNAc...) asparagine). A BNR 3 repeat occupies 351 to 361; sequence YLSRDGGKTWK. Residue Asn387 is glycosylated (N-linked (GlcNAc...) asparagine). The Proton donor role is filled by Asp489. The BNR 4 repeat unit spans residues 545–555; it reads YSTDGGSEWTK. Residues Asn564 and Asn603 are each glycosylated (N-linked (GlcNAc...) asparagine). A BNR 5 repeat occupies 649–658; that stretch reads YVSTDGGLSY. Asn662 carries an N-linked (GlcNAc...) asparagine glycan. 2 BNR repeats span residues 696–706 and 749–759; these read YHTTDFGKRWK and YRSDDNGSTWD. Asn754 carries an N-linked (GlcNAc...) asparagine glycan.

Belongs to the glycosyl hydrolase 74 family.

Its subcellular location is the secreted. It carries out the reaction Hydrolysis of cellobiose from the reducing end of xyloglucans consisting of a beta-(1-&gt;4)-linked glucan carrying alpha-D-xylosyl groups on O-6 of the glucose residues. To be a substrate, the first residue must be unsubstituted, the second residue may bear a xylosyl group, whether further glycosylated or not, and the third residue, which becomes the new terminus by the action of the enzyme, is preferably xylosylated, but this xylose residue must not be further substituted.. Oligoxyloglucan-reducing end-specific xyloglucanase involved in degradation of xyloglucans. Releases the first two glycosyl segments from oligoxyloglucans. Active against cotton xyloglucan, tamarind xyloglucan and tamarind xyloglucan oligomers. This chain is Probable oligoxyloglucan-reducing end-specific xyloglucanase (xgcA), found in Neosartorya fischeri (strain ATCC 1020 / DSM 3700 / CBS 544.65 / FGSC A1164 / JCM 1740 / NRRL 181 / WB 181) (Aspergillus fischerianus).